A 390-amino-acid polypeptide reads, in one-letter code: cAMP-dependent protein kinase regulatory subunit (390 aa).

Positions 1-17 (MSASGFTSPFGANSNPF) are enriched in polar residues. A disordered region spans residues 1 to 81 (MSASGFTSPF…RPQNPDGYPA (81 aa)). The dimerization and phosphorylation stretch occupies residues 1-129 (MSASGFTSPF…RLKKAIQGNF (129 aa)). A Phosphoserine modification is found at serine 90. Residues 130 to 261 (LFSH…EEVP), glutamate 208, arginine 217, 262 to 383 (ILST…GVEE), glutamate 329, and arginine 338 contribute to the 3',5'-cyclic AMP site.

The protein belongs to the cAMP-dependent kinase regulatory chain family. Tetramer, composed of 2 regulatory (R) and 2 catalytic (C) subunits. In the presence of cAMP it dissociates into 2 active monomeric C subunits and an R dimer.

The sequence is that of cAMP-dependent protein kinase regulatory subunit (SUM1) from Pyricularia oryzae (strain 70-15 / ATCC MYA-4617 / FGSC 8958) (Rice blast fungus).